A 292-amino-acid polypeptide reads, in one-letter code: Acetylglutamate kinase (292 aa).

Substrate contacts are provided by residues 64–65, R86, and N190; that span reads GG.

This sequence belongs to the acetylglutamate kinase family. ArgB subfamily.

It localises to the cytoplasm. The enzyme catalyses N-acetyl-L-glutamate + ATP = N-acetyl-L-glutamyl 5-phosphate + ADP. Its pathway is amino-acid biosynthesis; L-arginine biosynthesis; N(2)-acetyl-L-ornithine from L-glutamate: step 2/4. Functionally, catalyzes the ATP-dependent phosphorylation of N-acetyl-L-glutamate. The sequence is that of Acetylglutamate kinase from Citrifermentans bemidjiense (strain ATCC BAA-1014 / DSM 16622 / JCM 12645 / Bem) (Geobacter bemidjiensis).